Here is a 590-residue protein sequence, read N- to C-terminus: MLSLSQSLDAQLRAAMQRAFPEADAGLDPQLASASKQEFGDFQANGALPLAKPLKQAPRQIATAIVEQLQADPAFTDLCLEPQIAGPGFINLTIRPERLAAEVSARLGDERLGVPAVSNAAPVVVDFSSPNIAKEMHVGHLRSTIIGDSLARVLEFRGHPVLRLNHVGDWGTQFGMLITHLKQVAPEALDTADAVDLGDLVAFYREAKKRFDDDEAFQSTSRDEVVKLQGGDPVSLKAWGLLCDQSRREFQKIYDRLDILLSERGESFYNPFLPAVIDGLKAAELLVTDDGAQCVFLEGVQGKDGKPLPVIVQKSDGGFNYATTDLAAIRYRFGAAPEGDGARRVVYVTDAGQANHFAGVFQVAERAGWIPDGARLEHVPFGLVQGEDGKKLKTRAGDTVRLRDLLDEAVERAETDLRSRLKEEERSESEEFIQHVAGTVGLAAVKYADLSQNRITNYQFSFDRMLALQGNTAPYLLYAVVRIAGIARKGGDLAATNAQLQFSEPQEWALVRELLKFDAVIAEVEEELLPNRLCSYLFELSQVFNRFYDQVPVLKADPEALASRLALCRLTADTLRLGLGLLGIATLDRM.

The short motif at 130–140 (PNIAKEMHVGH) is the 'HIGH' region element.

The protein belongs to the class-I aminoacyl-tRNA synthetase family. Monomer.

It localises to the cytoplasm. The enzyme catalyses tRNA(Arg) + L-arginine + ATP = L-arginyl-tRNA(Arg) + AMP + diphosphate. The polypeptide is Arginine--tRNA ligase (Synechococcus sp. (strain CC9605)).